Consider the following 288-residue polypeptide: MEWSLSQNKLLAFHRLMRTDKPIGALLLLWPTLWALWVASPGVPPLWILAVFVAGVWLMRAAGCVVNDYADRKFDGHVKRTARRPLPSGDVTEKEARTLFIVLVLLSFLLVLTLNTMTILLSVAALALAWVYPFMKRYTHLPQVVLGAAFGWSIPMAFSAVSESLPLSCWLMFLANILWAVAYDTQYAMVDRDDDVKIGIKSTAILFGENDRLIIGILQVAVLALMGAVGWLNGLGWEYYWSLFVAAGLFGWQQKLIFNRDRDNCFKAFMNNNYVGLVLFLGLAMSYL.

6 helical membrane passes run 33–53, 99–119, 163–183, 213–233, 234–254, and 268–288; these read LWAL…AVFV, LFIV…TMTI, ESLP…AVAY, LIIG…GWLN, GLGW…GWQQ, and AFMN…MSYL.

It belongs to the UbiA prenyltransferase family. Requires Mg(2+) as cofactor.

It localises to the cell inner membrane. It catalyses the reaction all-trans-octaprenyl diphosphate + 4-hydroxybenzoate = 4-hydroxy-3-(all-trans-octaprenyl)benzoate + diphosphate. It functions in the pathway cofactor biosynthesis; ubiquinone biosynthesis. In terms of biological role, catalyzes the prenylation of para-hydroxybenzoate (PHB) with an all-trans polyprenyl group. Mediates the second step in the final reaction sequence of ubiquinone-8 (UQ-8) biosynthesis, which is the condensation of the polyisoprenoid side chain with PHB, generating the first membrane-bound Q intermediate 3-octaprenyl-4-hydroxybenzoate. The polypeptide is 4-hydroxybenzoate octaprenyltransferase (Klebsiella pneumoniae subsp. pneumoniae (strain ATCC 700721 / MGH 78578)).